The primary structure comprises 206 residues: Lipid A acyltransferase PagP (206 aa).

A signal peptide spans 1-22 (MKQMVCWLTAGLLTLGGLPARA). Residues 26–46 (VPAVPETPAAPAAPAVQETPA) are compositionally biased toward low complexity. The disordered stretch occupies residues 26 to 50 (VPAVPETPAAPAAPAVQETPASSAA). Catalysis depends on residues histidine 80, aspartate 123, and serine 124.

Belongs to the lipid A palmitoyltransferase family. As to quaternary structure, homodimer.

It localises to the cell outer membrane. The catalysed reaction is a lipid A + a 1,2-diacyl-sn-glycero-3-phosphocholine = a hepta-acyl lipid A + a 2-acyl-sn-glycero-3-phosphocholine. The enzyme catalyses a lipid IVA + a 1,2-diacyl-sn-glycero-3-phosphocholine = a lipid IVB + a 2-acyl-sn-glycero-3-phosphocholine. It catalyses the reaction a lipid IIA + a 1,2-diacyl-sn-glycero-3-phosphocholine = a lipid IIB + a 2-acyl-sn-glycero-3-phosphocholine. Its function is as follows. Transfers a fatty acid residue from the sn-1 position of a phospholipid to the N-linked hydroxyfatty acid chain on the proximal unit of lipid A or its precursors. The protein is Lipid A acyltransferase PagP of Laribacter hongkongensis (strain HLHK9).